The sequence spans 603 residues: Arginine--tRNA ligase (603 aa).

The short motif at 143-153 (PNIAKEMHVGH) is the 'HIGH' region element.

It belongs to the class-I aminoacyl-tRNA synthetase family. Monomer.

The protein localises to the cytoplasm. It catalyses the reaction tRNA(Arg) + L-arginine + ATP = L-arginyl-tRNA(Arg) + AMP + diphosphate. The protein is Arginine--tRNA ligase of Prochlorococcus marinus (strain SARG / CCMP1375 / SS120).